Reading from the N-terminus, the 507-residue chain is Germ cell nuclear acidic protein (507 aa).

The segment covering M1–S51 has biased composition (low complexity). Positions M1–K507 are disordered. 4 consecutive short sequence motifs (SUMO interaction motif 1 (SIM)) follow at residues S12–S15, C66–I69, V86–I89, and L108–I111. Basic and acidic residues-rich tracts occupy residues K122–V141, S179–M354, and P431–S449. Residues G480–K507 show a composition bias toward basic residues.

Belongs to the serine-aspartate repeat-containing protein (SDr) family. In terms of assembly, interacts (via SIM domains) with SUMO2; this interaction allows the GCNA recruitment to DPCs sites. Interacts with TOP2A; this interaction allows the resolution of topoisomerase II (TOP2A) DNA-protein cross-links. Germ-cells specific.

Its subcellular location is the chromosome. It is found in the nucleus. The protein resides in the PML body. Its function is as follows. May play a role in DNA-protein cross-links (DPCs) clearance through a SUMO-dependent recruitment to sites of DPCs, ensuring the genomic stability by protecting germ cells and early embryos from various sources of damage. Can resolve the topoisomerase II (TOP2A) DPCs. The protein is Germ cell nuclear acidic protein of Mus musculus (Mouse).